The sequence spans 368 residues: Geranylgeranyl pyrophosphate synthase dpfgD (368 aa).

3 residues coordinate isopentenyl diphosphate: lysine 48, arginine 51, and histidine 80. Mg(2+) contacts are provided by aspartate 87 and aspartate 91. Dimethylallyl diphosphate is bound at residue arginine 96. Arginine 97 contacts isopentenyl diphosphate. Residues lysine 174, threonine 175, and glutamine 208 each coordinate dimethylallyl diphosphate. Aspartate 211 serves as a coordination point for Mg(2+). The dimethylallyl diphosphate site is built by asparagine 215, lysine 225, and lysine 235.

It belongs to the FPP/GGPP synthase family. Mg(2+) is required as a cofactor.

It catalyses the reaction isopentenyl diphosphate + dimethylallyl diphosphate = (2E)-geranyl diphosphate + diphosphate. The catalysed reaction is isopentenyl diphosphate + (2E)-geranyl diphosphate = (2E,6E)-farnesyl diphosphate + diphosphate. It carries out the reaction isopentenyl diphosphate + (2E,6E)-farnesyl diphosphate = (2E,6E,10E)-geranylgeranyl diphosphate + diphosphate. The protein operates within secondary metabolite biosynthesis; terpenoid biosynthesis. Geranylgeranyl pyrophosphate synthase; part of the gene cluster that mediates the biosynthesis of diterpenoid pyrones. The first step of the pathway is the synthesis of the alpha-pyrone moiety by the polyketide synthase dpfgA via condensation of one acetyl-CoA starter unit with 3 malonyl-CoA units and 2 methylations. The alpha-pyrone is then combined with geranylgeranyl pyrophosphate (GGPP) formed by the GGPP synthase dpfgD through the action of the prenyltransferase dpfgC to yield a linear alpha-pyrone diterpenoid. Subsequent steps in the diterpenoid pyrone biosynthetic pathway involve the decalin core formation, which is initiated by the epoxidation of the C10-C11 olefin by the FAD-dependent oxidoreductase dpfgE, and is followed by a cyclization cascade catalyzed by the terpene cyclase dpfgB. The short chain dehydrogenase/reductase dpfgG then oxidizes the 8S hydroxy group to a ketone and the short chain dehydrogenase/reductase dpfgH reduces the ketone to the 8R hydroxy group to yield higginsianin B. Higginsianin B is further methylated by the methyltransferase dpfgI to produce the intermediate named FDDP B. The cytochrome P450 monooxygenase dfgpJ then catalyzes a three-step oxidation at C-27 to generate a carboxylic acid as well as C-26 hydroxylation. Finally, methyltransferase dpfgK methylates the carboxylic acid generated by dpfgJ, yielding the final diterpenoid pyrones from the pathway which were named FDDP D and FDDP E. The sequence is that of Geranylgeranyl pyrophosphate synthase dpfgD from Gibberella zeae (strain ATCC MYA-4620 / CBS 123657 / FGSC 9075 / NRRL 31084 / PH-1) (Wheat head blight fungus).